Consider the following 389-residue polypeptide: MLSTGSNSPEAAVLPGKPEVGLPLWLLAELTYRCPLQCPYCSNPLDFAEQGKELSTEQWIKVFREAREMGAAQLGFSGGEPLVRQDLAELIGEARKLGFYTNLITSGIGLTEQKISDFKKAGLDHIQISFQASDEQVNNLLAGSKKAFAQKLEMARAVKAHGYPMVLNFVTHRHNIDKIDRIIELCIALEADFVELATCQFYGWAQLNRVGLLPTKEQLVRAERITNEYRARLEAQGHLCKLIFVTPDYYEERPKACMNGWGSIFLTVTPDGTALPCHGARQMPVQFPNVRDHSMQHIWYDSFGFNRFRGYDWMPEPCRSCDEKEKDFGGCRCQAFMLTGDASNADPVCSKSPHHGMILQAREESETATHTIEQLAFRNERNSRLIAKG.

A Radical SAM core domain is found at 20-235 (VGLPLWLLAE…TNEYRARLEA (216 aa)). Cys34, Cys38, and Cys41 together coordinate [4Fe-4S] cluster.

It belongs to the radical SAM superfamily. PqqE family. Interacts with PqqD. The interaction is necessary for activity of PqqE. The cofactor is [4Fe-4S] cluster.

It catalyses the reaction [PQQ precursor protein] + S-adenosyl-L-methionine = E-Y cross-linked-[PQQ precursor protein] + 5'-deoxyadenosine + L-methionine + H(+). The protein operates within cofactor biosynthesis; pyrroloquinoline quinone biosynthesis. Catalyzes the cross-linking of a glutamate residue and a tyrosine residue in the PqqA protein as part of the biosynthesis of pyrroloquinoline quinone (PQQ). This chain is PqqA peptide cyclase, found in Pseudomonas fluorescens (strain ATCC BAA-477 / NRRL B-23932 / Pf-5).